Reading from the N-terminus, the 390-residue chain is Alkanesulfonate monooxygenase 1 (390 aa).

Residues threonine 364–serine 390 are disordered.

The protein belongs to the SsuD family.

The catalysed reaction is an alkanesulfonate + FMNH2 + O2 = an aldehyde + FMN + sulfite + H2O + 2 H(+). Catalyzes the desulfonation of aliphatic sulfonates. The sequence is that of Alkanesulfonate monooxygenase 1 (ssuD1) from Mesorhizobium japonicum (strain LMG 29417 / CECT 9101 / MAFF 303099) (Mesorhizobium loti (strain MAFF 303099)).